The primary structure comprises 375 residues: Succinyl-diaminopimelate desuccinylase (375 aa).

Zn(2+) is bound at residue His66. Asp68 is an active-site residue. Residue Asp99 coordinates Zn(2+). Glu133 acts as the Proton acceptor in catalysis. Zn(2+) contacts are provided by Glu134, Glu162, and His348.

Belongs to the peptidase M20A family. DapE subfamily. Homodimer. Zn(2+) is required as a cofactor. It depends on Co(2+) as a cofactor.

The catalysed reaction is N-succinyl-(2S,6S)-2,6-diaminopimelate + H2O = (2S,6S)-2,6-diaminopimelate + succinate. The protein operates within amino-acid biosynthesis; L-lysine biosynthesis via DAP pathway; LL-2,6-diaminopimelate from (S)-tetrahydrodipicolinate (succinylase route): step 3/3. Its function is as follows. Catalyzes the hydrolysis of N-succinyl-L,L-diaminopimelic acid (SDAP), forming succinate and LL-2,6-diaminopimelate (DAP), an intermediate involved in the bacterial biosynthesis of lysine and meso-diaminopimelic acid, an essential component of bacterial cell walls. This Escherichia coli O6:K15:H31 (strain 536 / UPEC) protein is Succinyl-diaminopimelate desuccinylase.